The chain runs to 334 residues: Aspartate carbamoyltransferase catalytic subunit (334 aa).

2 residues coordinate carbamoyl phosphate: Arg70 and Thr71. Lys98 is a binding site for L-aspartate. Arg120, His150, and Gln153 together coordinate carbamoyl phosphate. L-aspartate contacts are provided by Arg183 and Arg238. The carbamoyl phosphate site is built by Gly279 and Pro280.

It belongs to the aspartate/ornithine carbamoyltransferase superfamily. ATCase family. As to quaternary structure, heterododecamer (2C3:3R2) of six catalytic PyrB chains organized as two trimers (C3), and six regulatory PyrI chains organized as three dimers (R2).

It catalyses the reaction carbamoyl phosphate + L-aspartate = N-carbamoyl-L-aspartate + phosphate + H(+). It functions in the pathway pyrimidine metabolism; UMP biosynthesis via de novo pathway; (S)-dihydroorotate from bicarbonate: step 2/3. Catalyzes the condensation of carbamoyl phosphate and aspartate to form carbamoyl aspartate and inorganic phosphate, the committed step in the de novo pyrimidine nucleotide biosynthesis pathway. The chain is Aspartate carbamoyltransferase catalytic subunit from Marinomonas sp. (strain MWYL1).